Consider the following 1123-residue polypeptide: Telomerase reverse transcriptase (1123 aa).

The segment at 1 to 230 (MPRAPRCRAV…ARRRRGSPGS (230 aa)) is RNA-interacting domain 1. Positions 58–197 (VPWGARPPPA…APGLPGLPGL (140 aa)) are GQ motif. The required for regulating specificity for telomeric DNA and for processivity for primer elongation stretch occupies residues 137 to 141 (WGLLL). The interval 202-311 (AGAGASADLR…GVPHDPAHPE (110 aa)) is disordered. The Bipartite nuclear localization signal signature appears at 222 to 240 (RRRRGSPGSGVPLAKRPRR). Phosphoserine; by PKB/AKT1 is present on Ser227. Residues 231 to 308 (GVPLAKRPRR…GPQGVPHDPA (78 aa)) are linker. Over residues 260–279 (PPVSEAPAVTPAVAASPAAS) the composition is skewed to low complexity. Residues 309–539 (HPETKRFLYC…LARFLVLVDG (231 aa)) are RNA-interacting domain 2. Positions 312-317 (TKRFLY) match the TFLY; involved in RNA binding motif. Positions 360–510 (ARRMRRLPAR…MKVRDCTWLH (151 aa)) are QFP motif. A CP motif region spans residues 381-401 (LGNHARCPYRALLRTHCPLRA). Residue Ser446 is modified to Phosphoserine; by DYRK2. The Reverse transcriptase domain occupies 595–926 (EVRRHREARP…CLFPWCGLLL (332 aa)). Tyr697 is modified (phosphotyrosine; by SRC-type Tyr-kinases). The Mg(2+) site is built by Asp702, Asp859, and Asp860. The tract at residues 905–919 (LGSAAPLQLPAHCLF) is required for oligomerization. The segment at 921–925 (WCGLL) is primer grip sequence. The segment at 927-1123 (DTRTLEVSCD…LTADFKTILD (197 aa)) is CTE.

Belongs to the reverse transcriptase family. Telomerase subfamily. In terms of assembly, catalytic component of the telomerase holoenzyme complex composed of one molecule of TERT, one molecule of WRAP53/TCAB1, two molecules of H/ACA ribonucleoprotein complex subunits DKC1, NOP10, NHP2 and GAR1, and a telomerase RNA template component (TERC). The telomerase holoenzyme complex is associated with TEP1, SMG6/EST1A and POT1. The molecular chaperone HSP90/P23 complex is required for correct assembly and stabilization of the active telomerase. Interacts directly with HSP90A and PTGES3. Interacts with HSPA1A; the interaction occurs in the absence of TERC and dissociates once the complex has formed. Interacts with RAN; the interaction promotes nuclear export of TERT. Interacts with XPO1. Interacts with PTPN11; the interaction retains TERT in the nucleus. Interacts with NCL (via RRM1 and C-terminal RRM4/Arg/Gly-rich domains); the interaction is important for nucleolar localization of TERT. Interacts with SMARCA4 (via the bromodomain); the interaction regulates Wnt-mediated signaling. Interacts with MCRS1 (isoform MCRS2); the interaction inhibits in vitro telomerase activity. Interacts with PIF1; the interaction has no effect on the elongation activity of TERT. Interacts with PML; the interaction recruits TERT to PML bodies and inhibits telomerase activity. Interacts with GNL3L. Interacts with isoform 1 and isoform 2 of NVL. Interacts with DHX36. Interacts with ATF7. In terms of processing, phosphorylation at Tyr-697 under oxidative stress leads to translocation of TERT to the cytoplasm and reduces its antiapoptotic activity. Dephosphorylated by SHP2/PTPN11 leading to nuclear retention. Phosphorylation at Ser-227 by the AKT pathway promotes nuclear location. Phosphorylation at the G2/M phase at Ser-446 by DYRK2 promotes ubiquitination by the EDVP complex and degradation. Ubiquitinated by the EDVP complex, a E3 ligase complex following phosphorylation at Ser-446 by DYRK2. Ubiquitinated leads to proteasomal degradation.

It is found in the nucleus. The protein localises to the nucleolus. It localises to the nucleoplasm. Its subcellular location is the chromosome. The protein resides in the telomere. It is found in the cytoplasm. The protein localises to the PML body. It carries out the reaction DNA(n) + a 2'-deoxyribonucleoside 5'-triphosphate = DNA(n+1) + diphosphate. Telomerase is a ribonucleoprotein enzyme essential for the replication of chromosome termini in most eukaryotes. Active in progenitor and cancer cells. Inactive, or very low activity, in normal somatic cells. Catalytic component of the teleromerase holoenzyme complex whose main activity is the elongation of telomeres by acting as a reverse transcriptase that adds simple sequence repeats to chromosome ends by copying a template sequence within the RNA component of the enzyme. Catalyzes the RNA-dependent extension of 3'-chromosomal termini with the 6-nucleotide telomeric repeat unit, 5'-TTAGGG-3'. The catalytic cycle involves primer binding, primer extension and release of product once the template boundary has been reached or nascent product translocation followed by further extension. More active on substrates containing 2 or 3 telomeric repeats. Telomerase activity is regulated by a number of factors including telomerase complex-associated proteins, chaperones and polypeptide modifiers. Modulates Wnt signaling. Plays important roles in aging and antiapoptosis. This Canis lupus familiaris (Dog) protein is Telomerase reverse transcriptase (TERT).